A 456-amino-acid polypeptide reads, in one-letter code: Bifunctional protein GlmU (456 aa).

Positions 1–229 (MLNSAMSVVI…ISETDGVNNR (229 aa)) are pyrophosphorylase. UDP-N-acetyl-alpha-D-glucosamine contacts are provided by residues 11 to 14 (LAAG), K25, Q76, 81 to 82 (GT), 103 to 105 (YGD), G140, E154, N169, and N227. D105 is a binding site for Mg(2+). Residue N227 participates in Mg(2+) binding. The interval 230-250 (LQLSRLERIYQAEQAEKLLLS) is linker. Positions 251–456 (GVMLRDPARF…QGWQRPVKKK (206 aa)) are N-acetyltransferase. 2 residues coordinate UDP-N-acetyl-alpha-D-glucosamine: R333 and K351. H363 serves as the catalytic Proton acceptor. UDP-N-acetyl-alpha-D-glucosamine is bound by residues Y366 and N377. Acetyl-CoA is bound by residues A380, 386 to 387 (NY), S405, A423, and R440.

It in the N-terminal section; belongs to the N-acetylglucosamine-1-phosphate uridyltransferase family. The protein in the C-terminal section; belongs to the transferase hexapeptide repeat family. Homotrimer. Requires Mg(2+) as cofactor.

The protein resides in the cytoplasm. It catalyses the reaction alpha-D-glucosamine 1-phosphate + acetyl-CoA = N-acetyl-alpha-D-glucosamine 1-phosphate + CoA + H(+). The catalysed reaction is N-acetyl-alpha-D-glucosamine 1-phosphate + UTP + H(+) = UDP-N-acetyl-alpha-D-glucosamine + diphosphate. The protein operates within nucleotide-sugar biosynthesis; UDP-N-acetyl-alpha-D-glucosamine biosynthesis; N-acetyl-alpha-D-glucosamine 1-phosphate from alpha-D-glucosamine 6-phosphate (route II): step 2/2. It functions in the pathway nucleotide-sugar biosynthesis; UDP-N-acetyl-alpha-D-glucosamine biosynthesis; UDP-N-acetyl-alpha-D-glucosamine from N-acetyl-alpha-D-glucosamine 1-phosphate: step 1/1. It participates in bacterial outer membrane biogenesis; LPS lipid A biosynthesis. Functionally, catalyzes the last two sequential reactions in the de novo biosynthetic pathway for UDP-N-acetylglucosamine (UDP-GlcNAc). The C-terminal domain catalyzes the transfer of acetyl group from acetyl coenzyme A to glucosamine-1-phosphate (GlcN-1-P) to produce N-acetylglucosamine-1-phosphate (GlcNAc-1-P), which is converted into UDP-GlcNAc by the transfer of uridine 5-monophosphate (from uridine 5-triphosphate), a reaction catalyzed by the N-terminal domain. This is Bifunctional protein GlmU from Salmonella gallinarum (strain 287/91 / NCTC 13346).